The following is a 492-amino-acid chain: Probable cytosol aminopeptidase (492 aa).

Lys-248 and Asp-253 together coordinate Mn(2+). Residue Lys-260 is part of the active site. 3 residues coordinate Mn(2+): Asp-271, Asp-330, and Glu-332. Arg-334 is a catalytic residue.

Belongs to the peptidase M17 family. The cofactor is Mn(2+).

Its subcellular location is the cytoplasm. The enzyme catalyses Release of an N-terminal amino acid, Xaa-|-Yaa-, in which Xaa is preferably Leu, but may be other amino acids including Pro although not Arg or Lys, and Yaa may be Pro. Amino acid amides and methyl esters are also readily hydrolyzed, but rates on arylamides are exceedingly low.. It catalyses the reaction Release of an N-terminal amino acid, preferentially leucine, but not glutamic or aspartic acids.. Functionally, presumably involved in the processing and regular turnover of intracellular proteins. Catalyzes the removal of unsubstituted N-terminal amino acids from various peptides. The polypeptide is Probable cytosol aminopeptidase (pepA) (Aeropyrum pernix (strain ATCC 700893 / DSM 11879 / JCM 9820 / NBRC 100138 / K1)).